The primary structure comprises 187 residues: MESLQNHFLIAMPSLHDTFFERSVIYICEHDAKGAMGLVINKPLGIEVNSLLEQMDLPAEQVSTDLAFNANVMMGGPVSQDRGFVLHTSQPYWANSTDLGCGLMLTTSRDVLTAIGSNRSPEKFLVALGYAGWSKDQLEQELADNSWLTIPATNALLFDIKHEDRWPQASRALGFDAWQVSAQAGHA.

This sequence belongs to the UPF0301 (AlgH) family.

This chain is UPF0301 protein Sbal195_3177, found in Shewanella baltica (strain OS195).